The following is a 134-amino-acid chain: UPF0412 protein YaaI (134 aa).

Positions 1–23 (MRSVLTISAGLLFGLALSSVAHA) are cleaved as a signal peptide.

The protein belongs to the UPF0412 family.

This Salmonella agona (strain SL483) protein is UPF0412 protein YaaI.